The sequence spans 326 residues: MGVSAEPRSLSVARAGLASPVIEKARSALLPSQDVEDTVETLMLHPVIKAFLCGSISGTCSTLLFQPLDLLKTRLQTLQPSDVGPRRVGMLSVFLKVVRTESLLGLWKGMSPSIVRCVPGVGIYFGTLYSSKQYFLRGHPPTALESVILGMGSRSVAGVCMSPITVVKTRYESGAYSYESVYAALRSIYCSEGSRGLFRGLTATLLRDAPFSGLYLMFYSQTRATVLHGADELDAALMPLVNFSCGVFAGILASLVTQPADVIKTHMQLSTVKCQCIGQVATLILKTHGLRGFFHGSVPRALRRTLMAAMAWTVYEEMMAKMGLKS.

Solcar repeat units follow at residues 45–134 (HPVI…SKQY), 141–225 (PTAL…TRAT), and 237–321 (LMPL…MMAK). A run of 6 helical transmembrane segments spans residues 51–76 (FLCGSISGTCSTLLFQPLDLLKTRLQ), 109–135 (GMSPSIVRCVPGVGIYFGTLYSSKQYF), 147–172 (VILGMGSRSVAGVCMSPITVVKTRYE), 200–223 (GLTATLLRDAPFSGLYLMFYSQTR), 241–267 (VNFSCGVFAGILASLVTQPADVIKTHM), and 296–314 (GSVPRALRRTLMAAMAWTV).

It belongs to the mitochondrial carrier (TC 2.A.29) family. SLC25A38 subfamily.

It is found in the mitochondrion inner membrane. It carries out the reaction glycine(in) = glycine(out). Functionally, mitochondrial glycine transporter that imports glycine into the mitochondrial matrix. Plays an important role in providing glycine for the first enzymatic step in heme biosynthesis, the condensation of glycine with succinyl-CoA to produce 5-aminolevulinate (ALA) in the mitochondrial matrix. Required during erythropoiesis. Its function is as follows. Plays a role as pro-apoptotic protein that induces caspase-dependent apoptosis. In Rattus norvegicus (Rat), this protein is Mitochondrial glycine transporter.